Reading from the N-terminus, the 458-residue chain is 5-hydroxytryptamine receptor 2C (458 aa).

The N-terminal stretch at 1–32 (MVNLRKAVHSFLVHLIGLLVWQCDISVSPVAA) is a signal peptide. Topologically, residues 33–55 (LVTDIFNTSDGGRFKFPDGVQNW) are extracellular. The helical transmembrane segment at 56-80 (PALSIVIIIILTIGGNILVIMAVSL) threads the bilayer. Topologically, residues 81–86 (EKKLHN) are cytoplasmic. The helical transmembrane segment at 87–111 (ATNYFLMSLAIADMLVGLLVMPLSL) threads the bilayer. Residues 112–128 (LAILYDYVWPLPRYLCP) lie on the Extracellular side of the membrane. C127 and C207 form a disulfide bridge. A helical membrane pass occupies residues 129-151 (VWISLDVLFSTASIMHLCAISLD). T139 contacts ergotamine. A DRY motif; important for ligand-induced conformation changes motif is present at residues 151–153 (DRY). The Cytoplasmic portion of the chain corresponds to 152 to 167 (RYVAIRNPVEHSRFNS). The helical transmembrane segment at 168 to 189 (RTKAIMKIAIVWAISIGVSVPI) threads the bilayer. Topologically, residues 190-213 (PVIGLRDEEKVFVNNTTCVLNDPN) are extracellular. Residues N203 and N204 are each glycosylated (N-linked (GlcNAc...) asparagine). L209 serves as a coordination point for ergotamine. Residues 214-236 (FVLIGSFVAFFIPLTIMVITYCL) form a helical membrane-spanning segment. Over 237–311 (TIHVLRRQAL…AINNERKASK (75 aa)) the chain is Cytoplasmic. Residues 272–301 (TEEENSANPNQDSNPRRRKKKERRPRGTMQ) are disordered. Residues 287–297 (RRRKKKERRPR) are compositionally biased toward basic residues. The helical transmembrane segment at 312 to 336 (VLGIVFFVFLVMWCPFFITNILSVL) threads the bilayer. C337 and C341 form a disulfide bridge. Residues 337 to 347 (CGKACNQKLME) are Extracellular-facing. A helical membrane pass occupies residues 348-370 (KLLNVFVWIGYVCSGINPLVYTL). Positions 364 to 368 (NPLVY) match the NPxxY motif; important for ligand-induced conformation changes and signaling motif. Residues 371 to 458 (FNKIYRRAFS…SVVSERISSV (88 aa)) are Cytoplasmic-facing. A PDZ-binding motif is present at residues 456–458 (SSV).

Belongs to the G-protein coupled receptor 1 family. In terms of assembly, interacts with MPDZ. Interacts with ARRB2. Interacts with MPP3; this interaction stabilizes the receptor at the plasma membrane and prevents the desensitization of the HTR2C receptor-mediated calcium response.

Its subcellular location is the cell membrane. In terms of biological role, G-protein coupled receptor for 5-hydroxytryptamine (serotonin). Also functions as a receptor for various drugs and psychoactive substances, including ergot alkaloid derivatives, 1-2,5,-dimethoxy-4-iodophenyl-2-aminopropane (DOI) and lysergic acid diethylamide (LSD). Ligand binding causes a conformation change that triggers signaling via guanine nucleotide-binding proteins (G proteins) and modulates the activity of downstream effectors. HTR2C is coupled to G(q)/G(11) G alpha proteins and activates phospholipase C-beta, releasing diacylglycerol (DAG) and inositol 1,4,5-trisphosphate (IP3) second messengers that modulate the activity of phosphatidylinositol 3-kinase and promote the release of Ca(2+) ions from intracellular stores, respectively. Beta-arrestin family members inhibit signaling via G proteins and mediate activation of alternative signaling pathways. Regulates neuronal activity via the activation of short transient receptor potential calcium channels in the brain, and thereby modulates the activation of pro-opiomelanocortin neurons and the release of CRH that then regulates the release of corticosterone. Plays a role in the regulation of appetite and eating behavior, responses to anxiogenic stimuli and stress. Plays a role in insulin sensitivity and glucose homeostasis. This chain is 5-hydroxytryptamine receptor 2C, found in Canis lupus familiaris (Dog).